A 570-amino-acid polypeptide reads, in one-letter code: Double-stranded RNA-binding protein Staufen homolog 2 (570 aa).

Positions 8–75 (TPVCLVNELA…ANKALTESTL (68 aa)) constitute a DRBM 1 domain. Disordered stretches follow at residues 71–94 (TEST…PGSI) and 178–203 (ALQN…DDKD). Polar residues predominate over residues 83-94 (PKSNVNNNPGSI). In terms of domain architecture, DRBM 2 spans 95–181 (TPTVELNGLA…AMKALQALQN (87 aa)). Residue serine 188 is modified to Phosphoserine. Residues 194-203 (SGKEMDDDKD) are compositionally biased toward basic and acidic residues. DRBM domains lie at 207-274 (SEIS…ELKK) and 307-375 (NPIS…QLGY). 2 short sequence motifs (nuclear localization signal) span residues 273–291 (KKLP…FKKR) and 373–412 (LGYK…PKGI). The interval 381 to 413 (LQDPLDKTGENKGWSGPKPGFPEPTNNTPKGIL) is disordered. The required for dendritic transport stretch occupies residues 381-570 (LQDPLDKTGE…QDCKKSKSAI (190 aa)). Serine 395 bears the Phosphoserine mark. The residue at position 405 (threonine 405) is a Phosphothreonine. 5 positions are modified to phosphoserine: serine 416, serine 426, serine 440, serine 455, and serine 492. The segment at 545 to 570 (LREKADNNQAKPASISQDCKKSKSAI) is disordered. Over residues 551–561 (NNQAKPASISQ) the composition is skewed to polar residues.

As to quaternary structure, interacts with microtubules. Isoform 2 and isoform 3 may also interact with ribosomes, and this association is independent of translation. Identified in a mRNP complex, at least composed of DHX9, DDX3X, ELAVL1, HNRNPU, IGF2BP1, ILF3, PABPC1, PCBP2, PTBP2, STAU1, STAU2, SYNCRIP and YBX1. Interacts with the exportin XPO5. This requires RNA and RAN bound to GTP. Interacts with TRIM71 (via NHL repeats) in an RNA-dependent manner. In terms of tissue distribution, expressed in brain and neurons, where isoform 2 and isoform 3 appear to be the most abundant. Expressed at the neuromuscular junction of the extensor digitorum longus, tibialis anterior and soleus muscles. Expression at neuromuscular junctions is most pronounced in slow-twitch muscle. Also weakly expressed in heart, kidney, ovary and testis.

It is found in the cytoplasm. The protein resides in the nucleus. The protein localises to the nucleolus. It localises to the endoplasmic reticulum. Functionally, RNA-binding protein required for the microtubule-dependent transport of neuronal RNA from the cell body to the dendrite. As protein synthesis occurs within the dendrite, the localization of specific mRNAs to dendrites may be a prerequisite for neurite outgrowth and plasticity at sites distant from the cell body. The sequence is that of Double-stranded RNA-binding protein Staufen homolog 2 (Stau2) from Mus musculus (Mouse).